Consider the following 787-residue polypeptide: Pleckstrin homology domain-containing family G member 6 (787 aa).

In terms of domain architecture, DH spans 161–353 (HQQEALWELL…ESFLRHINGQ (193 aa)). Residues 409–509 (QLLLEGPVRV…WLEKTQHAQT (101 aa)) enclose the PH domain. The disordered stretch occupies residues 533 to 762 (QGTESPSTRP…EPGNGKPRRL (230 aa)). Residues 535–557 (TESPSTRPSTPSPSPEDSQSSAE) show a composition bias toward low complexity. The span at 724-742 (LRPRSLREDMLREIREELA) shows a compositional bias: basic and acidic residues.

As to quaternary structure, interacts with MYH10. Interacts with ELMO1 and EZR (in an open conformation). Interacts with CSPP1.

Its subcellular location is the cell projection. It localises to the microvillus. It is found in the cytoplasm. The protein localises to the cytoskeleton. The protein resides in the spindle. Its subcellular location is the cleavage furrow. In terms of biological role, guanine nucleotide exchange factor activating the small GTPase RHOA, which, in turn, induces myosin filament formation. Also activates RHOG. Does not activate RAC1, or to a much lower extent than RHOA and RHOG. Part of a functional unit, involving PLEKHG6, MYH10 and RHOA, at the cleavage furrow to advance furrow ingression during cytokinesis. In epithelial cells, required for the formation of microvilli and membrane ruffles on the apical pole. Along with EZR, required for normal macropinocytosis. The protein is Pleckstrin homology domain-containing family G member 6 (Plekhg6) of Mus musculus (Mouse).